A 324-amino-acid polypeptide reads, in one-letter code: Acetyl-coenzyme A carboxylase carboxyl transferase subunit alpha (324 aa).

The CoA carboxyltransferase C-terminal domain maps to 44-298 (RFQDKLTKLQ…RKELIKQLNI (255 aa)).

It belongs to the AccA family. Acetyl-CoA carboxylase is a heterohexamer composed of biotin carboxyl carrier protein (accB), biotin carboxylase (accC) and two subunits each of ACCase subunit alpha (accA) and ACCase subunit beta (accD).

The protein localises to the plastid. It localises to the chloroplast. The enzyme catalyses N(6)-carboxybiotinyl-L-lysyl-[protein] + acetyl-CoA = N(6)-biotinyl-L-lysyl-[protein] + malonyl-CoA. It participates in lipid metabolism; malonyl-CoA biosynthesis; malonyl-CoA from acetyl-CoA: step 1/1. Component of the acetyl coenzyme A carboxylase (ACC) complex. First, biotin carboxylase catalyzes the carboxylation of biotin on its carrier protein (BCCP) and then the CO(2) group is transferred by the carboxyltransferase to acetyl-CoA to form malonyl-CoA. In Porphyra purpurea (Red seaweed), this protein is Acetyl-coenzyme A carboxylase carboxyl transferase subunit alpha.